Here is a 541-residue protein sequence, read N- to C-terminus: tRNA uridine(34) acetyltransferase (541 aa).

Residues 76 to 336 form a radical S-adenosyl-L-methionine (rSAM) region; the sequence is KPVRTISGVA…GEYKPYREEE (261 aa). The region spanning 79-350 is the Radical SAM core domain; that stretch reads RTISGVAVVA…ISYAKSIMPK (272 aa). [4Fe-4S] cluster-binding residues include Cys96, Cys101, and Cys104. Acetyl-CoA-binding positions include Lys156, 467–470, 491–493, and Tyr524; these read QLHV and YGR. Residues 401-541 enclose the N-acetyltransferase domain; the sequence is VMYKKGIMPD…VGAYMGKYLE (141 aa).

The protein belongs to the ELP3 family. The cofactor is [4Fe-4S] cluster.

It carries out the reaction uridine(34) in tRNA + acetyl-CoA + S-adenosyl-L-methionine + H2O = 5-(carboxymethyl)uridine(34) in tRNA + 5'-deoxyadenosine + L-methionine + CoA + 2 H(+). Its pathway is tRNA modification. Functionally, tRNA uridine(34) acetyltransferase, which mediates formation of carboxymethyluridine in the wobble base at position 34 in tRNAs. The proposed mechanism is the following: (i) recruits S-adenosyl-L-methionine and cleaves it to generate a 5'-deoxyadenosine radical (5'-dA) in the radical S-adenosyl-L-methionine (rSAM) region, (ii) hydrolyzes acetyl-CoA in the N-acetyltransferase domain and (iii) an acetyl radical is formed by the products of the two domains and (iv) is transferred onto the C5 position of uridine(34) in the bound tRNA molecule. Does not show protein lysine acetyltransferase activity. This Methanocaldococcus jannaschii (strain ATCC 43067 / DSM 2661 / JAL-1 / JCM 10045 / NBRC 100440) (Methanococcus jannaschii) protein is tRNA uridine(34) acetyltransferase.